A 230-amino-acid chain; its full sequence is Ribonuclease 3 (230 aa).

Residues tyrosine 5–aspartate 125 enclose the RNase III domain. Residue glutamate 40 participates in Mg(2+) binding. The active site involves aspartate 44. Mg(2+)-binding residues include aspartate 111 and glutamate 114. Residue glutamate 114 is part of the active site. Positions aspartate 153–glutamine 223 constitute a DRBM domain.

Belongs to the ribonuclease III family. Homodimer. Requires Mg(2+) as cofactor.

The protein resides in the cytoplasm. It carries out the reaction Endonucleolytic cleavage to 5'-phosphomonoester.. Functionally, digests double-stranded RNA. Involved in the processing of primary rRNA transcript to yield the immediate precursors to the large and small rRNAs (23S and 16S). Also processes some mRNAs, and tRNAs when they are encoded in the rRNA operon. In terms of biological role, CRISPR (clustered regularly interspaced short palindromic repeat) is an adaptive immune system that provides protection against mobile genetic elements (viruses, transposable elements and conjugative plasmids). CRISPR clusters contain spacers, sequences complementary to antecedent mobile elements, and target invading nucleic acids. CRISPR clusters are transcribed and processed into CRISPR RNA (crRNA). In this organism endogenous ribonuclease 3 and Cas9 are required for correct coprocessing of pre-crRNA and the trans-encoded small RNA (tracrRNA). Cas9, crRNA and tracrRNA are required for cleavage of invading DNA. Complements pre-crRNA and tracrRNA coprocessing defects in an rnc deletion in S.pyogenes strain 370. The sequence is that of Ribonuclease 3 from Francisella tularensis subsp. novicida (strain U112).